Consider the following 111-residue polypeptide: uncharacterized protein (111 aa).

The first 18 residues, 1 to 18, serve as a signal peptide directing secretion; it reads MGKSMEEGIFVKVFPSKA.

This is an uncharacterized protein from Acidianus convivator (ATV).